Here is a 205-residue protein sequence, read N- to C-terminus: Leucyl/phenylalanyl-tRNA--protein transferase (205 aa).

This sequence belongs to the L/F-transferase family.

The protein resides in the cytoplasm. It catalyses the reaction N-terminal L-lysyl-[protein] + L-leucyl-tRNA(Leu) = N-terminal L-leucyl-L-lysyl-[protein] + tRNA(Leu) + H(+). The enzyme catalyses N-terminal L-arginyl-[protein] + L-leucyl-tRNA(Leu) = N-terminal L-leucyl-L-arginyl-[protein] + tRNA(Leu) + H(+). The catalysed reaction is L-phenylalanyl-tRNA(Phe) + an N-terminal L-alpha-aminoacyl-[protein] = an N-terminal L-phenylalanyl-L-alpha-aminoacyl-[protein] + tRNA(Phe). Its function is as follows. Functions in the N-end rule pathway of protein degradation where it conjugates Leu, Phe and, less efficiently, Met from aminoacyl-tRNAs to the N-termini of proteins containing an N-terminal arginine or lysine. This Mesorhizobium japonicum (strain LMG 29417 / CECT 9101 / MAFF 303099) (Mesorhizobium loti (strain MAFF 303099)) protein is Leucyl/phenylalanyl-tRNA--protein transferase.